We begin with the raw amino-acid sequence, 259 residues long: Putative electron transfer flavoprotein subunit YgcR (259 aa).

Belongs to the ETF beta-subunit/FixA family. In terms of assembly, ygcQ and YgcR form a heterodimer.

May play a role in a redox process. This Escherichia coli (strain K12) protein is Putative electron transfer flavoprotein subunit YgcR (ygcR).